A 208-amino-acid chain; its full sequence is Imidazoleglycerol-phosphate dehydratase (208 aa).

This sequence belongs to the imidazoleglycerol-phosphate dehydratase family.

The protein localises to the cytoplasm. The catalysed reaction is D-erythro-1-(imidazol-4-yl)glycerol 3-phosphate = 3-(imidazol-4-yl)-2-oxopropyl phosphate + H2O. The protein operates within amino-acid biosynthesis; L-histidine biosynthesis; L-histidine from 5-phospho-alpha-D-ribose 1-diphosphate: step 6/9. In Mycobacterium sp. (strain JLS), this protein is Imidazoleglycerol-phosphate dehydratase.